The sequence spans 274 residues: Coiled-coil domain-containing protein 28A (274 aa).

A disordered region spans residues 121–166 (VSKSTGFSNPASQSTSQRPKLKRVMKEKTKPQGGEGKGAQSTPIQH). Polar residues predominate over residues 122–138 (SKSTGFSNPASQSTSQR). Residues 234 to 263 (KRKTASDSNLDRLLSDLEELNSSIQKLHLA) are a coiled coil.

The chain is Coiled-coil domain-containing protein 28A (CCDC28A) from Homo sapiens (Human).